A 1667-amino-acid polypeptide reads, in one-letter code: Myomesin-1 (1667 aa).

2 positions are modified to phosphoserine: Ser124 and Ser142. A compositionally biased stretch (low complexity) spans 192–210 (SKQSTASKQSATSKRTTST). Residues 192–217 (SKQSTASKQSATSKRTTSTLQREETF) are disordered. Ig-like C2-type domains follow at residues 258–349 (PEFI…ASVV) and 376–478 (PYGY…AYVF). Fibronectin type-III domains follow at residues 492 to 587 (APLD…ALDP), 620 to 714 (PPTD…VVGD), and 721 to 814 (APGK…VKAA). The interval 818–915 (GVSPDVWPQL…PKKKKDPVAV (98 aa)) is disordered. Ser863 and Ser867 each carry phosphoserine. Over residues 885–894 (EPLSSPPQEA) the composition is skewed to low complexity. Fibronectin type-III domains lie at 918-1016 (APYD…CEEW) and 1023-1122 (PPHS…TRPG). Ser1036 carries the post-translational modification Phosphoserine. 3 consecutive Ig-like C2-type domains span residues 1114 to 1212 (PVVA…EEMK), 1340 to 1426 (PHFA…LKLV), and 1555 to 1644 (RVLG…FTVS).

Homodimer. Interacts with TTN/titin and PNKD. As to expression, ubiquitously expressed in all striated muscles. Expressed in all fiber types.

It is found in the cytoplasm. The protein resides in the myofibril. The protein localises to the sarcomere. Its subcellular location is the m line. Its function is as follows. May link the intermediate filament cytoskeleton to the M-disk of the myofibrils in striated muscle. May also contact myosin filaments. Also binds beta-integrins. The polypeptide is Myomesin-1 (Myom1) (Mus musculus (Mouse)).